The following is a 1243-amino-acid chain: Probable phospholipid-transporting ATPase 7 (1243 aa).

Residues 1–74 (MGRRRIRSRI…TTRYNLITFL (74 aa)) lie on the Cytoplasmic side of the membrane. Residues 75-96 (PKCLYEQFHRVANFYFLVAAIL) form a helical membrane-spanning segment. The Extracellular segment spans residues 97-100 (SVFP). The chain crosses the membrane as a helical span at residues 101 to 123 (LSPFNKWSMIAPLIFVVGLSMGK). Topologically, residues 124–305 (EALEDWRRFM…SRIEKRMDYI (182 aa)) are cytoplasmic. The helical transmembrane segment at 306 to 327 (IYTLFALLVLVSFISSLGFAVM) threads the bilayer. Topologically, residues 328 to 359 (TKMHMGDWWYLRPDKPERLTNPRNPFHAWVVH) are extracellular. A helical transmembrane segment spans residues 360–377 (LITAVLLYGYLIPISLYV). The Cytoplasmic portion of the chain corresponds to 378-941 (SIELVKVLQA…HGHWCYKRIA (564 aa)). The active-site 4-aspartylphosphate intermediate is the Asp425. Lys623 participates in a covalent cross-link: Glycyl lysine isopeptide (Lys-Gly) (interchain with G-Cter in ubiquitin). Residues Asp886 and Asp890 each contribute to the Mg(2+) site. A helical membrane pass occupies residues 942 to 961 (QMICYFFYKNITFGLTLFYF). Topologically, residues 962–975 (EAFTGFSGQAIYND) are extracellular. The helical transmembrane segment at 976–995 (SYLLLFNVILTSLPVIALGV) threads the bilayer. Residues 996-1025 (FEQDVSSEVCLQFPALYQQGPKNLFFDWYR) lie on the Cytoplasmic side of the membrane. The chain crosses the membrane as a helical span at residues 1026-1048 (IIGWMANGVYASVVIFSLNIGIF). Topologically, residues 1049 to 1061 (HVQSFCSGGQTAD) are extracellular. A helical transmembrane segment spans residues 1062 to 1084 (MDAMGTAMFTCIIWAVNVQIALT). The Cytoplasmic portion of the chain corresponds to 1085-1090 (MSHFTW). The helical transmembrane segment at 1091–1111 (IQHVLIWGSIVTWYIFLALFG) threads the bilayer. The Extracellular portion of the chain corresponds to 1112–1128 (MLPPKVSGNIFHMLSET). The chain crosses the membrane as a helical span at residues 1129–1153 (LAPAPIFWLTSLLVIAATTLPYLAY). Residues 1154 to 1243 (ISFQRSLNPL…TDTTSTTQHS (90 aa)) are Cytoplasmic-facing.

The protein belongs to the cation transport ATPase (P-type) (TC 3.A.3) family. Type IV subfamily.

It is found in the cell membrane. The protein resides in the endomembrane system. It catalyses the reaction ATP + H2O + phospholipidSide 1 = ADP + phosphate + phospholipidSide 2.. Functionally, involved in transport of phospholipids and in regulation of pollen plasma membrane lipid asymmetry. This Arabidopsis thaliana (Mouse-ear cress) protein is Probable phospholipid-transporting ATPase 7.